We begin with the raw amino-acid sequence, 446 residues long: tRNA modification GTPase MnmE (446 aa).

Positions 22, 80, and 119 each coordinate (6S)-5-formyl-5,6,7,8-tetrahydrofolate. Residues 215–370 (GLSLVIAGRP…LKKVIKQVVG (156 aa)) enclose the TrmE-type G domain. Asn225 is a binding site for K(+). GTP is bound by residues 225–230 (NAGKST), 244–250 (TEIAGTT), and 269–272 (DTAG). Ser229 contributes to the Mg(2+) binding site. Residues Thr244, Ile246, and Thr249 each coordinate K(+). Thr250 provides a ligand contact to Mg(2+). Residue Lys446 participates in (6S)-5-formyl-5,6,7,8-tetrahydrofolate binding.

Belongs to the TRAFAC class TrmE-Era-EngA-EngB-Septin-like GTPase superfamily. TrmE GTPase family. In terms of assembly, homodimer. Heterotetramer of two MnmE and two MnmG subunits. K(+) serves as cofactor.

It is found in the cytoplasm. In terms of biological role, exhibits a very high intrinsic GTPase hydrolysis rate. Involved in the addition of a carboxymethylaminomethyl (cmnm) group at the wobble position (U34) of certain tRNAs, forming tRNA-cmnm(5)s(2)U34. In Legionella pneumophila subsp. pneumophila (strain Philadelphia 1 / ATCC 33152 / DSM 7513), this protein is tRNA modification GTPase MnmE.